The following is a 359-amino-acid chain: Membrane-bound lytic murein transglycosylase C (359 aa).

An N-terminal signal peptide occupies residues 1 to 16 (MKKYLALALIAPLLIS). C17 carries N-palmitoyl cysteine lipidation. The S-diacylglycerol cysteine moiety is linked to residue C17.

This sequence belongs to the transglycosylase Slt family.

Its subcellular location is the cell outer membrane. The enzyme catalyses Exolytic cleavage of the (1-&gt;4)-beta-glycosidic linkage between N-acetylmuramic acid (MurNAc) and N-acetylglucosamine (GlcNAc) residues in peptidoglycan, from either the reducing or the non-reducing ends of the peptidoglycan chains, with concomitant formation of a 1,6-anhydrobond in the MurNAc residue.. In terms of biological role, murein-degrading enzyme. May play a role in recycling of muropeptides during cell elongation and/or cell division. In Escherichia coli O139:H28 (strain E24377A / ETEC), this protein is Membrane-bound lytic murein transglycosylase C.